A 588-amino-acid chain; its full sequence is Hyaluronan synthase 1 (588 aa).

Residues 1–28 lie on the Cytoplasmic side of the membrane; that stretch reads MKEKAAETMEIPEGIPKDLEPKHPTLWR. Residues 29–49 form a helical membrane-spanning segment; the sequence is IIYYSFGVVLLATITAAYVAE. Over 50-61 the chain is Extracellular; sequence FQVLKHEAILFS. The chain crosses the membrane as a helical span at residues 62–82; that stretch reads LGLYGLAMLLHLMMQSLFAFL. At 83 to 411 the chain is on the cytoplasmic side; that stretch reads EIRRVNKSEL…IWMTYESVVS (329 aa). A helical transmembrane segment spans residues 412-432; sequence FIFPFFITATVIRLIYAGTIW. N433 is a topological domain (extracellular). Residues 434-454 form a helical membrane-spanning segment; sequence VVWLLLCIQIMSLFKSIYACW. Residues 455–456 are Cytoplasmic-facing; that stretch reads LR. A helical transmembrane segment spans residues 457–477; it reads GNFIMLLMSLYSMLYMTGLLP. Over 478–505 the chain is Extracellular; it reads SKYFALLTLNKTGWGTSGRKKIVGNYMP. The chain crosses the membrane as a helical span at residues 506 to 526; sequence ILPLSIWAAVLCGGVGYSIYM. The Cytoplasmic segment spans residues 527–543; sequence DCQNDWSTPEKQKEMYH. Residues 544 to 564 form a helical membrane-spanning segment; the sequence is LLYGCVGYVMYWVIMAVMYWV. Residues 565 to 588 are Extracellular-facing; sequence WVKRCCRKRSQTVTLVHDIPDMCV.

This sequence belongs to the NodC/HAS family. The cofactor is Mg(2+). Expression moves as a gradient through the embryo. The mRNA is first expressed in the animal region of the blastula, and by early gastrula is found everywhere except in the outer layer of the dorsal blastopore lip. By mid-gastrula, protein is present in the inner ectodermal layer and the endoderm, then disappears from dorsal ectoderm as the neural plate is induced and later decays in a dorsoventral direction. Last expressed in ventral regions of the gut at the tailbud stage (at protein level).

Its subcellular location is the membrane. It catalyses the reaction [hyaluronan](n) + UDP-N-acetyl-alpha-D-glucosamine = N-acetyl-beta-D-glucosaminyl-(1-&gt;4)-[hyaluronan](n) + UDP + H(+). The catalysed reaction is N-acetyl-beta-D-glucosaminyl-(1-&gt;4)-[hyaluronan](n) + UDP-alpha-D-glucuronate = [hyaluronan](n+1) + UDP + H(+). The protein operates within glycan biosynthesis; hyaluronan biosynthesis. Catalyzes the addition of GlcNAc or GlcUA monosaccharides to the nascent hyaluronan polymer. Therefore, it is essential to hyaluronan synthesis a major component of most extracellular matrices that has a structural role in tissues architectures and regulates cell adhesion, migration and differentiation. Also able to catalyze the synthesis of chito-oligosaccharide depending on the substrate. The sequence is that of Hyaluronan synthase 1 (has1) from Xenopus laevis (African clawed frog).